A 1490-amino-acid polypeptide reads, in one-letter code: Leucine-rich repeat-containing protein 7 (1490 aa).

17 LRR repeats span residues 23–44, 47–68, 70–91, 93–114, 116–137, 139–161, 162–183, 185–206, 208–229, 231–253, 254–275, 277–298, 300–321, 323–344, 346–367, 369–391, and 392–413; these read IISVLDYSHCSLQQVPKEVFNF, TLEELYLDANQIEELPKQLFNC, ALRKLSIPDNDLSSLPTSIASL, NLKELDISKNGVQEFPENIKCC, CLTIIEASVNPISKLPDGFTQL, NLTQLYLNDAFLEFLPANFGRLV, KLRILELRENHLKTLPKSMHKL, QLERLDLGNNEFSELPEVLDQI, NLRELWMDNNALQVLPGSIGKL, MLVYLDMSKNRIETVDMDISGCE, ALEDLLLSSNMLQQLPDSIGLL, KLTTLKVDDNQLTMLPNTIGNL, LLEEFDCSCNELESLPPTIGYL, SLRTLAVDENFLPELPREIGSC, NVTVMSLRSNKLEFLPEEIGQM, RLRVLNLSDNRLKNLPFSFTKLK, and ELAALWLSDNQSKALIPLQTEA. Ser439, Ser441, and Ser443 each carry phosphoserine. Residues 663 to 676 are compositionally biased toward basic and acidic residues; that stretch reads KKESTDESEVDKTH. Disordered stretches follow at residues 663 to 709, 775 to 808, and 822 to 899; these read KKES…VGSL, DNTGFVSEEATGENANNNPLLSSKARSVPAHGRR, and ELEQ…YHDP. Positions 677 to 686 are enriched in polar residues; that stretch reads CLNNSVSSGT. The segment covering 687–700 has biased composition (low complexity); it reads YSDYSPSQASSASS. The span at 787-799 shows a compositional bias: polar residues; that stretch reads ENANNNPLLSSKA. Thr831 is modified (phosphothreonine). At Ser850 the chain carries Phosphoserine. Residues 859–871 show a composition bias toward low complexity; sequence PSKLETTPTTSPL. Thr865 carries the post-translational modification Phosphothreonine. Ser869 is subject to Phosphoserine. Basic and acidic residues predominate over residues 872–882; that stretch reads PERKDHMKEPT. Phosphoserine is present on residues Ser947, Ser949, and Ser1118. At Arg1149 the chain carries Omega-N-methylarginine. The segment covering 1194–1217 has biased composition (polar residues); that stretch reads LTQRRPLSARSYSTESYGASQTRP. Residues 1194–1218 are disordered; it reads LTQRRPLSARSYSTESYGASQTRPV. Ser1233 carries the post-translational modification Phosphoserine. Disordered stretches follow at residues 1238–1265 and 1282–1312; these read GNYGDKTSDNSDIKTRPTPVKGEESCGK and RLDRTPSQQSNILDNGQEDVSPSGQWNPYPL. Residues 1243–1263 show a composition bias toward basic and acidic residues; sequence KTSDNSDIKTRPTPVKGEESC. Residues 1286–1307 show a composition bias toward polar residues; the sequence is TPSQQSNILDNGQEDVSPSGQW. Residues Ser1288 and Ser1392 each carry the phosphoserine modification. Positions 1398–1488 constitute a PDZ domain; the sequence is EQFCVRIEKN…TVDLVIQREL (91 aa).

This sequence belongs to the LAP (LRR and PDZ) protein family. Interacts with CNKSR2 and DLG4. Interacts with CTNND2/Catenin delta-2. Forms a complex with N-cadherin through CTNND2. Interacts with CAMK2A. Post-translationally, O-glycosylated and phosphorylated. Brain-specific. Highly concentrated at synapses.

The protein resides in the cytoplasm. It is found in the postsynaptic density. Required for normal synaptic spine architecture and function. Necessary for DISC1 and GRM5 localization to postsynaptic density complexes and for both N-methyl D-aspartate receptor-dependent and metabotropic glutamate receptor-dependent long term depression. The chain is Leucine-rich repeat-containing protein 7 (Lrrc7) from Rattus norvegicus (Rat).